The chain runs to 463 residues: Matrix remodeling-associated protein 8 (463 aa).

The signal sequence occupies residues Met1–Ala19. Residues Val20–Gln362 lie on the Extracellular side of the membrane. Ig-like V-type domains follow at residues Pro29–Thr173 and Pro176–Thr308. Disulfide bonds link Cys54/Cys153 and Cys202/Cys288. Asn135 carries an N-linked (GlcNAc...) asparagine glycan. Residue Ser244 is modified to Phosphoserine. The short motif at Arg268–Asp270 is the RGD element. The disordered stretch occupies residues Glu309–Leu341. Positions Ser321 to Gly335 are enriched in low complexity. The N-linked (GlcNAc...) asparagine glycan is linked to Asn324. A helical membrane pass occupies residues Leu363–Ala383. The Cytoplasmic segment spans residues Thr384 to Lys463.

As to quaternary structure, homodimer in cis. Does not appear to form trans-homodimers. Interacts with ITGB3; the interaction inhibits ITGAV:ITGB3 heterodimer formation.

It is found in the cell membrane. The protein localises to the cell junction. It localises to the tight junction. Its subcellular location is the cytoplasm. The protein resides in the cell projection. It is found in the cilium membrane. The protein localises to the nucleus. Transmembrane protein which can modulate activity of various signaling pathways, probably via binding to integrin ITGAV:ITGB3. Mediates heterophilic cell-cell interactions in vitro. Inhibits osteoclastogenesis downstream of TNFSF11/RANKL and CSF1, where it may function by attenuating signaling via integrin ITGB3 and MAP kinase p38. Plays a role in cartilage formation where it promotes proliferation and maturation of growth plate chondrocytes. Stimulates formation of primary cilia in chondrocytes. Enhances expression of genes involved in the hedgehog signaling pathway in chondrocytes, including the hedgehog signaling molecule IHH; may also promote signaling via the PTHLH/PTHrP pathway. Plays a role in angiogenesis where it suppresses migration of endothelial cells and also promotes their apoptosis. Inhibits VEGF-induced activation of AKT and p38 MAP kinase in endothelial cells. Also inhibits VTN (vitronectin)-mediated integrin ITGAV:ITGB3 signaling and activation of PTK2/FAK. May play a role in the maturation and maintenance of the blood-brain barrier. The chain is Matrix remodeling-associated protein 8 (MXRA8) from Bos taurus (Bovine).